Consider the following 199-residue polypeptide: Ribosome maturation factor RimM (199 aa).

In terms of domain architecture, PRC barrel spans 100-195 (ADEWYPKDLI…YLTLDPPGGL (96 aa)).

Belongs to the RimM family. Binds ribosomal protein uS19.

Its subcellular location is the cytoplasm. Its function is as follows. An accessory protein needed during the final step in the assembly of 30S ribosomal subunit, possibly for assembly of the head region. Essential for efficient processing of 16S rRNA. May be needed both before and after RbfA during the maturation of 16S rRNA. It has affinity for free ribosomal 30S subunits but not for 70S ribosomes. The sequence is that of Ribosome maturation factor RimM from Bifidobacterium longum (strain DJO10A).